We begin with the raw amino-acid sequence, 449 residues long: MFS-type transporter hasB (449 aa).

The next 12 membrane-spanning stretches (helical) occupy residues 44–64 (VAGSFLLQFCSFGYVNACGIF), 80–100 (ALAWITTLQIFLLFMFGPAVG), 112–132 (LPPFSIGAVFSVCMLSLCTKY), 135–155 (VMLAQGVAFGLAAAGLSLPAM), 168–188 (LAVGIVSAGSSLGGVIYPCML), 195–215 (VGFASAVRWTALMQGILLFIA), 255–275 (LPWGFFVLGCFFTMWGLFAPL), 296–316 (AIANAGSLVGRIVPGWVSDII), 322–342 (MCIVTSLSGVLVLAFWLPLEF), 346–366 (LAGIIVFALLFGFVSGGFVSL), 387–407 (GGFCLAIALGALTGLPIEGAI), and 415–435 (FTGLMCFAGATMILGGVCTGT).

The protein belongs to the major facilitator superfamily. Monocarboxylate porter (TC 2.A.1.13) family.

The protein localises to the membrane. In terms of biological role, MFS-type transporter; part of the gene cluster that mediates the biosynthesis of hexadehydro-astechrome (HAS), a tryptophan-derived iron(III)-complex that acts as a virulence factor in infected mice. Required for the production of HAS. The chain is MFS-type transporter hasB from Aspergillus fumigatus (strain CBS 144.89 / FGSC A1163 / CEA10) (Neosartorya fumigata).